Here is a 216-residue protein sequence, read N- to C-terminus: Ras-related protein Rab-5C (216 aa).

The GTP site is built by S30, A31, G33, K34, S35, S36, H47, E48, T53, and G79. S35 provides a ligand contact to Mg(2+). 2 short sequence motifs (switch) span residues 45–57 (QFHE…IGAA) and 78–94 (AGQE…YRGA). T53 provides a ligand contact to Mg(2+). Position 85 is a phosphoserine (S85). GTP is bound by residues N134, K135, D137, A165, and K166. Residues 185-216 (NEPQNAAGAPGRTRGVDLQESNPASRSQCCSN) are disordered. The segment covering 203–216 (QESNPASRSQCCSN) has biased composition (polar residues). S-geranylgeranyl cysteine attachment occurs at residues C213 and C214.

Belongs to the small GTPase superfamily. Rab family. Interacts with EEA1 and INCA1. Interacts with GDI1, GDI2, CHML and CHM; phosphorylation at Ser-85 disrupts this interaction. Mg(2+) serves as cofactor. Phosphorylation of Ser-85 in the switch II region by LRRK2 prevents the association of RAB regulatory proteins, including CHM, CHML and RAB GDP dissociation inhibitors GDI1 and GDI2.

Its subcellular location is the cell membrane. The protein localises to the early endosome membrane. It is found in the melanosome. The enzyme catalyses GTP + H2O = GDP + phosphate + H(+). Its activity is regulated as follows. Regulated by guanine nucleotide exchange factors (GEFs) which promote the exchange of bound GDP for free GTP. Regulated by GTPase activating proteins (GAPs) which increase the GTP hydrolysis activity. Inhibited by GDP dissociation inhibitors (GDIs). The small GTPases Rab are key regulators of intracellular membrane trafficking, from the formation of transport vesicles to their fusion with membranes. Rabs cycle between an inactive GDP-bound form and an active GTP-bound form that is able to recruit to membranes different sets of downstream effectors directly responsible for vesicle formation, movement, tethering and fusion. The chain is Ras-related protein Rab-5C from Mus musculus (Mouse).